The primary structure comprises 504 residues: MSKKALLMILDGWGLGDQKKDDVIFNTPTPYWDYLMNNYPHSQLQASGENVGLPDGQMGNSEVGHLNIGAGRVVYQDLVKINRACADNSILQNPEIVSAFSYAKENGKSVHFMGLTSNGGVHSSMVHLFKLCDISKEYGIDNTFIHCFMDGRDTDPKSGKGFIEELSAHCEKSAGKIASIIGRYYAMDRDKRWERVKEAYDLLVNGQGKKATDMVQAMQESYDEGVTDEFIKPIVNANCDGTIKEGDVVIFFNYRNDRAKELTVVLTQQDMPEAGMHTIPGLQYYCMTPYDASFKGVHILFDKENVANTLGEYIASKGLNQLHIAETEKYAHVTFFFNGGRETPFDNEDRILVPSPKVATYDLKPEMSAYEVKDKLVDAINENKYDFIVVNFANGDMVGHTGIYEAIEKAVVAVDACVKDVIEAAKAQDYEAIIIADHGNADRALNEDGTPNTAHSLNPVPCVYVTGNKAAKVEDGRLADVAPTILKIMGLEAPADMNGQILIK.

Mn(2+) contacts are provided by Asp-11 and Ser-61. Ser-61 serves as the catalytic Phosphoserine intermediate. Substrate contacts are provided by residues His-122, 152-153, Arg-183, Arg-189, 255-258, and Lys-329; these read RD and RNDR. Residues Asp-396, His-400, Asp-437, His-438, and His-455 each coordinate Mn(2+).

This sequence belongs to the BPG-independent phosphoglycerate mutase family. As to quaternary structure, monomer. Requires Mn(2+) as cofactor.

The catalysed reaction is (2R)-2-phosphoglycerate = (2R)-3-phosphoglycerate. It functions in the pathway carbohydrate degradation; glycolysis; pyruvate from D-glyceraldehyde 3-phosphate: step 3/5. Functionally, catalyzes the interconversion of 2-phosphoglycerate and 3-phosphoglycerate. This Bacteroides thetaiotaomicron (strain ATCC 29148 / DSM 2079 / JCM 5827 / CCUG 10774 / NCTC 10582 / VPI-5482 / E50) protein is 2,3-bisphosphoglycerate-independent phosphoglycerate mutase.